The following is an 84-amino-acid chain: Cell division topological specificity factor (84 aa).

This sequence belongs to the MinE family.

In terms of biological role, prevents the cell division inhibition by proteins MinC and MinD at internal division sites while permitting inhibition at polar sites. This ensures cell division at the proper site by restricting the formation of a division septum at the midpoint of the long axis of the cell. The sequence is that of Cell division topological specificity factor from Ectopseudomonas mendocina (strain ymp) (Pseudomonas mendocina).